We begin with the raw amino-acid sequence, 161 residues long: MKYDTSELCDIYQEDVNVVEPLFSNFGGRSSFGGQIITVKCFEDNGLLYDLLEQNGRGRVLLVDGGGSVRRALVDAELARLATQNEWEGLVIYGAVRQVDDLEELDIGIQAIAAIPVGAAGEGIGESDVRVNFGGVTFFSGDHLYADNTGIILSEDPLDIE.

It belongs to the RraA family. In terms of assembly, homotrimer. Binds to both RNA-binding sites in the C-terminal region of Rne and to RhlB.

It is found in the cytoplasm. In terms of biological role, globally modulates RNA abundance by binding to RNase E (Rne) and regulating its endonucleolytic activity. Can modulate Rne action in a substrate-dependent manner by altering the composition of the degradosome. Modulates RNA-binding and helicase activities of the degradosome. The chain is Regulator of ribonuclease activity A from Salmonella agona (strain SL483).